The sequence spans 365 residues: Histidinol-phosphate aminotransferase (365 aa).

Lys-221 carries the post-translational modification N6-(pyridoxal phosphate)lysine.

This sequence belongs to the class-II pyridoxal-phosphate-dependent aminotransferase family. Histidinol-phosphate aminotransferase subfamily. As to quaternary structure, homodimer. It depends on pyridoxal 5'-phosphate as a cofactor.

The enzyme catalyses L-histidinol phosphate + 2-oxoglutarate = 3-(imidazol-4-yl)-2-oxopropyl phosphate + L-glutamate. Its pathway is amino-acid biosynthesis; L-histidine biosynthesis; L-histidine from 5-phospho-alpha-D-ribose 1-diphosphate: step 7/9. The chain is Histidinol-phosphate aminotransferase from Nitrobacter hamburgensis (strain DSM 10229 / NCIMB 13809 / X14).